The primary structure comprises 305 residues: Dihydroorotate dehydrogenase B (NAD(+)), catalytic subunit (305 aa).

Residues Ser23 and 47–48 contribute to the FMN site; that span reads KG. Residues Lys47 and 71-75 contribute to the substrate site; that span reads NAIGL. FMN-binding residues include Asn101 and Asn129. Residue Asn129 participates in substrate binding. Catalysis depends on Cys132, which acts as the Nucleophile. Positions 167 and 193 each coordinate FMN. Residue 194-195 participates in substrate binding; sequence NT. Residues Gly219, 245–246, and 267–268 contribute to the FMN site; these read GG and GT.

It belongs to the dihydroorotate dehydrogenase family. Type 1 subfamily. In terms of assembly, heterotetramer of 2 PyrK and 2 PyrD type B subunits. It depends on FMN as a cofactor.

The protein localises to the cytoplasm. It catalyses the reaction (S)-dihydroorotate + NAD(+) = orotate + NADH + H(+). Its pathway is pyrimidine metabolism; UMP biosynthesis via de novo pathway; orotate from (S)-dihydroorotate (NAD(+) route): step 1/1. Functionally, catalyzes the conversion of dihydroorotate to orotate with NAD(+) as electron acceptor. This chain is Dihydroorotate dehydrogenase B (NAD(+)), catalytic subunit (pyrD), found in Geotalea uraniireducens (strain Rf4) (Geobacter uraniireducens).